We begin with the raw amino-acid sequence, 222 residues long: 7-cyano-7-deazaguanine synthase (222 aa).

Residue 7-17 coordinates ATP; sequence LSGGMDSAVAT. Positions 188, 196, 199, and 202 each coordinate Zn(2+).

Belongs to the QueC family. Zn(2+) is required as a cofactor.

The catalysed reaction is 7-carboxy-7-deazaguanine + NH4(+) + ATP = 7-cyano-7-deazaguanine + ADP + phosphate + H2O + H(+). It participates in purine metabolism; 7-cyano-7-deazaguanine biosynthesis. In terms of biological role, catalyzes the ATP-dependent conversion of 7-carboxy-7-deazaguanine (CDG) to 7-cyano-7-deazaguanine (preQ(0)). The sequence is that of 7-cyano-7-deazaguanine synthase from Methanothermobacter thermautotrophicus (strain ATCC 29096 / DSM 1053 / JCM 10044 / NBRC 100330 / Delta H) (Methanobacterium thermoautotrophicum).